Consider the following 706-residue polypeptide: Acyl-coenzyme A oxidase (706 aa).

The segment at 682 to 706 (MLNRPSKEERERFEKSTETAKILSK) is disordered. The span at 686-699 (PSKEERERFEKSTE) shows a compositional bias: basic and acidic residues.

The protein belongs to the acyl-CoA oxidase family. Requires FAD as cofactor.

Its subcellular location is the peroxisome. It carries out the reaction a 2,3-saturated acyl-CoA + O2 = a (2E)-enoyl-CoA + H2O2. It participates in lipid metabolism; peroxisomal fatty acid beta-oxidation. The protein is Acyl-coenzyme A oxidase (POX1) of Debaryomyces hansenii (strain ATCC 36239 / CBS 767 / BCRC 21394 / JCM 1990 / NBRC 0083 / IGC 2968) (Yeast).